The chain runs to 659 residues: Crossover junction endonuclease MUS81 (659 aa).

The short motif at Lys59–Tyr78 is the Helix-hairpin-helix motif 1 element. The ERCC4 domain occupies Ile404–Asp503. The short motif at Thr585 to Tyr622 is the Helix-hairpin-helix motif 2 element.

This sequence belongs to the XPF family. In terms of assembly, forms a heterodimer with EME1A or EME1B. Mg(2+) is required as a cofactor. Ca(2+) serves as cofactor. In terms of tissue distribution, ubiquitous but preferentially expressed in young flowers buds, notably in anthers.

The protein resides in the nucleus. It is found in the nucleolus. Functionally, interacts with EME1 to form a DNA structure-specific endonuclease with substrate preference for branched DNA structures with a 5'-end at the branch nick. Typical substrates include 3'-flap structures, D-loops, replication forks, nicked Holliday junctions and also intact Holliday junctions with a reduced efficiency. May be required in mitosis for the processing of stalled or collapsed replication fork intermediates. Plays a role in DNA repair and in genotoxic stress-induced homologous recombination (HR) in somatic cells. Mediates a subset of meiotic recombination events that are insensitive to crossover interference. Together with SEND1, essential for the resolution of toxic replication structures to ensure genome stability, and to maintain telomere integrity and replication. In Arabidopsis thaliana (Mouse-ear cress), this protein is Crossover junction endonuclease MUS81.